A 42-amino-acid chain; its full sequence is Photosystem I reaction center subunit IX (42 aa).

A helical transmembrane segment spans residues 7-27; that stretch reads YLSVAPVLSTLWFGALAGLLI.

It belongs to the PsaJ family.

It localises to the plastid. The protein resides in the chloroplast thylakoid membrane. Its function is as follows. May help in the organization of the PsaE and PsaF subunits. This Agrostis stolonifera (Creeping bentgrass) protein is Photosystem I reaction center subunit IX.